The chain runs to 142 residues: Small ribosomal subunit protein bS6 (142 aa).

Residues 110 to 133 (NKKPSHAKEKHEKTEHTHSHHAEE) are compositionally biased toward basic and acidic residues. The tract at residues 110–142 (NKKPSHAKEKHEKTEHTHSHHAEEAESVGSHSE) is disordered.

Belongs to the bacterial ribosomal protein bS6 family.

In terms of biological role, binds together with bS18 to 16S ribosomal RNA. This Helicobacter pylori (strain P12) protein is Small ribosomal subunit protein bS6.